Here is a 247-residue protein sequence, read N- to C-terminus: Uridylate kinase (247 aa).

15–18 (KLSG) is a binding site for ATP. The tract at residues 23–28 (GDEGFG) is involved in allosteric activation by GTP. Gly57 is a binding site for UMP. ATP is bound by residues Gly58 and Arg62. Residues Asp77 and 138–145 (TGNPFFTT) each bind UMP. The ATP site is built by Thr165, Tyr171, and Asp174.

This sequence belongs to the UMP kinase family. Homohexamer.

The protein resides in the cytoplasm. The catalysed reaction is UMP + ATP = UDP + ADP. The protein operates within pyrimidine metabolism; CTP biosynthesis via de novo pathway; UDP from UMP (UMPK route): step 1/1. Allosterically activated by GTP. Inhibited by UTP. Its function is as follows. Catalyzes the reversible phosphorylation of UMP to UDP. This Colwellia psychrerythraea (strain 34H / ATCC BAA-681) (Vibrio psychroerythus) protein is Uridylate kinase.